Here is a 365-residue protein sequence, read N- to C-terminus: Chorismate synthase (365 aa).

R46 serves as a coordination point for NADP(+). FMN is bound by residues 123–125 (RSS), 241–242 (NG), G281, 296–300 (KPTPS), and R322.

It belongs to the chorismate synthase family. In terms of assembly, homotetramer. It depends on FMNH2 as a cofactor.

The catalysed reaction is 5-O-(1-carboxyvinyl)-3-phosphoshikimate = chorismate + phosphate. It functions in the pathway metabolic intermediate biosynthesis; chorismate biosynthesis; chorismate from D-erythrose 4-phosphate and phosphoenolpyruvate: step 7/7. In terms of biological role, catalyzes the anti-1,4-elimination of the C-3 phosphate and the C-6 proR hydrogen from 5-enolpyruvylshikimate-3-phosphate (EPSP) to yield chorismate, which is the branch point compound that serves as the starting substrate for the three terminal pathways of aromatic amino acid biosynthesis. This reaction introduces a second double bond into the aromatic ring system. This chain is Chorismate synthase, found in Helicobacter pylori (strain G27).